A 1236-amino-acid chain; its full sequence is MFPYPQLNFPPVYPTNPMAYRDPNPPRCRWRPFRPPLAAQIEDLRRSIANLTFKQRSPNPPPGPPPKKKKSAPKPKPTQPKKKKQQAKKTKRKPKPGKRQRMCMKLESDKTFPIMLNGQVNGYACVVGGRLMKPLHVEGKIDNEQLAAVKLKKASMYDLEYGDVPQNMKSDTLQYTSDKPPGFYNWHHGAVQYENGRFTVPRGVGGKGDSGRPILDNRGRVVAIVLGGANEGTRTALSVVTWNQKGVTIKDTPEGSEPWSLVTALCVLSNVTFPCDKPPVCYSLAPERTLDVLEENVDNPNYDTLLENVLKCPSRRPKRSITDDFTLTSPYLGFCPYCRHSAPCFSPIKIENVWDESDDGSIRIQVSAQFGYNQAGTADVTKFRYMSFDHDHDIKEDSMDKIAISTSGPCRRLGHKGYFLLAQCPPGDSVTVSITSGASENSCTVEKKIRRKFVGREEYLFPPVHGKLVKCHVYDHLKETSAGYITMHRPGPHAYKSYLEEASGEVYIKPPSGKNVTYECKCGDYSTGIVSTRTKMNGCTKAKQCIAYKSDQTKWVFNSPDLIRHTDHSVQGKLHIPFRLTPTVCPVPLAHTPTVTKWFKGITLHLTATRPTLLTTRKLGLRADATAEWITGTTSRNFSVGREGLEYVWGNHEPVRVWAQESAPGDPHGWPHEIIIHYYHRHPVYTVIVLCGVALAILVGTASSAACIAKARRDCLTPYALAPNATVPTALAVLCCIRPTNAETFGETLNHLWFNNQPFLWAQLCIPLAALVILFRCFSCCMPFLLVAGVCLGKVDAFEHATTVPNVPGIPYKALVERAGYAPLNLEITVVSSELTPSTNKEYVTCRFHTVIPSPQVKCCGSLECKASSKADYTCRVFGGVYPFMWGGAQCFCDSENTQLSEAYVEFAPDCTIDHAVALKVHTAALKVGLRIVYGNTTAHLDTFVNGVTPGSSRDLKVIAGPISAAFSPFDHKVVIRKGLVYNYDFPEYGAMKPGAFGDIQASSLDATDIVARTDIRLLKPSVKNIHVPYTQAVSGYEMWKNNSGRPLQETAPFGCKIEVEPLRASNCAYGHIPISIDIPDAAFVRSSESPTILEVSCTVADCIYSADFGGSLTLQYKADREGHCPVHSHSTTAVLKEATTHVTAVGSITLHFSTSSPQANFIVSLCGKKTTCNAECKPPADHIIGEPHKVDQEFQAAVSKTSWNWLLALFGGASSLIVVGLIVLVCSSMLINTRR.

Residues 1-36 (MFPYPQLNFPPVYPTNPMAYRDPNPPRCRWRPFRPP) form a necessary for nucleocapsid assembly and virus assembly region. Positions 37–70 (LAAQIEDLRRSIANLTFKQRSPNPPPGPPPKKKK) are host transcription inhibition. Positions 44-51 (LRRSIANL) match the Supraphysiological nuclear export signal motif. The tract at residues 44–103 (LRRSIANLTFKQRSPNPPPGPPPKKKKSAPKPKPTQPKKKKQQAKKTKRKPKPGKRQRMC) is disordered. The segment covering 66 to 102 (PKKKKSAPKPKPTQPKKKKQQAKKTKRKPKPGKRQRM) has biased composition (basic residues). A Nuclear localization signal motif is present at residues 67-70 (KKKK). Residues 83 to 111 (KKQQAKKTKRKPKPGKRQRMCMKLESDKT) are binding to the viral RNA. Positions 96–110 (PGKRQRMCMKLESDK) are ribosome-binding. The residue at position 108 (S108) is a Phosphoserine. The Peptidase S3 domain maps to 110–259 (KTFPIMLNGQ…KDTPEGSEPW (150 aa)). Residue T111 is modified to Phosphothreonine. The active-site Charge relay system is the H136. Positions 152–157 (KKASMY) are interaction with spike glycoprotein E2. Catalysis depends on charge relay system residues D158 and S210. Residues 244–248 (QKGVT) are interaction with spike glycoprotein E2. Residues 260 to 271 (SLVTALCVLSNV) form a functions as an uncleaved signal peptide for the precursor of protein E3/E2 region. Residues 260 to 687 (SLVTALCVLS…YYHRHPVYTV (428 aa)) lie on the Extracellular side of the membrane. 7 disulfide bridges follow: C266–C275, C335–C443, C338–C344, C410–C424, C471–C585, C520–C545, and C522–C539. N-linked (GlcNAc...) asparagine; by host glycosylation occurs at N270. N-linked (GlcNAc...) asparagine; by host glycosylation occurs at N515. The N-linked (GlcNAc...) asparagine; by host glycan is linked to N637. Residues 688–708 (IVLCGVALAILVGTASSAACI) traverse the membrane as a helical segment. The Cytoplasmic segment spans residues 709–742 (AKARRDCLTPYALAPNATVPTALAVLCCIRPTNA). The interaction with the capsid protein stretch occupies residues 710-714 (KARRD). Residues C715, C735, and C736 are each lipidated (S-palmitoyl cysteine; by host). Cysteines 715 and 736 form a disulfide. A transient transmembrane before p62-6K protein processing region spans residues 717–737 (TPYALAPNATVPTALAVLCCI). The Extracellular portion of the chain corresponds to 743-767 (ETFGETLNHLWFNNQPFLWAQLCIP). The next 2 helical transmembrane spans lie at 768–788 (LAALVILFRCFSCCMPFLLVA) and 789–809 (GVCLGKVDAFEHATTVPNVPG). The Extracellular portion of the chain corresponds to 810 to 1205 (IPYKALVERA…QAAVSKTSWN (396 aa)). Cystine bridges form between C846–C911, C859–C891, C860–C893, and C865–C875. The tract at residues 881-898 (VYPFMWGGAQCFCDSENT) is E1 fusion peptide loop. N-linked (GlcNAc...) asparagine; by host glycans are attached at residues N936, N1042, and N1067. 4 cysteine pairs are disulfide-bonded: C1056–C1068, C1098–C1173, C1103–C1177, and C1125–C1167. Residues 1206-1226 (WLLALFGGASSLIVVGLIVLV) form a helical membrane-spanning segment. The Cytoplasmic segment spans residues 1227–1236 (CSSMLINTRR).

As to quaternary structure, homodimer. Homomultimer. Interacts with host karyopherin KPNA4; this interaction allows the nuclear import of the viral capsid protein. Interacts with spike glycoprotein E2. Interacts with host IRAK1; the interaction leads to inhibition of IRAK1-dependent signaling. Part of a tetrameric complex composed of host CRM1, host importin alpha/beta dimer and the viral capsid; this complex blocks the receptor-mediated transport through the nuclear pore. Interacts with host phosphatase PPP1CA; this interaction dephosphorylates the capsid protein, which increases its ability to bind to the viral genome. In terms of assembly, the precursor of protein E3/E2 and E1 form a heterodimer shortly after synthesis. Interacts with spike glycoprotein E2. The precursor of protein E3/E2 and E1 form a heterodimer shortly after synthesis. Processing of the precursor of protein E3/E2 into E2 and E3 results in a heterodimer of the spike glycoproteins E2 and E1. Spike at virion surface are constituted of three E2-E1 heterodimers. After target cell attachment and endocytosis, E1 change conformation to form homotrimers. Interacts with 6K protein. As to quaternary structure, interacts with spike glycoprotein E1. Processing of the precursor of protein E3/E2 into E2 and E3 results in a heterodimer of the spike glycoproteins E2 and E1. Spike at virion surface are constituted of a trimer of E2-E1 heterodimers. Interacts with 6K protein. The E2-E1 heterodimer interacts with host PCDH10 (via domain Cadherin 1); this interaction mediates viral entry to the host cell. In terms of assembly, oligomer. Interacts with spike glycoprotein E1. Interacts with spike glycoprotein E2. Structural polyprotein: Specific enzymatic cleavages in vivo yield mature proteins. Capsid protein is auto-cleaved during polyprotein translation, unmasking a signal peptide at the N-terminus of the precursor of E3/E2. The remaining polyprotein is then targeted to the host endoplasmic reticulum, where host signal peptidase cleaves it into pE2, 6K and E1 proteins. pE2 is further processed to mature E3 and E2 by host furin in trans-Golgi vesicle. Post-translationally, phosphorylated on serine and threonine residues. In terms of processing, palmitoylated via thioester bonds. These palmitoylations may induce disruption of the C-terminus transmembrane. This would result in the reorientation of E2 C-terminus from lumenal to cytoplasmic side. N-glycosylated. Post-translationally, palmitoylated via thioester bonds.

The protein localises to the virion. The protein resides in the host cytoplasm. It is found in the host cell membrane. Its subcellular location is the host nucleus. It localises to the virion membrane. The protein localises to the host Golgi apparatus. The protein resides in the host trans-Golgi network. It is found in the host endoplasmic reticulum. The enzyme catalyses Autocatalytic release of the core protein from the N-terminus of the togavirus structural polyprotein by hydrolysis of a -Trp-|-Ser- bond.. In terms of biological role, forms an icosahedral capsid with a T=4 symmetry composed of 240 copies of the capsid protein surrounded by a lipid membrane through which penetrate 80 spikes composed of trimers of E1-E2 heterodimers. The capsid protein binds to the viral RNA genome at a site adjacent to a ribosome binding site for viral genome translation following genome release. Possesses a protease activity that results in its autocatalytic cleavage from the nascent structural protein. Following its self-cleavage, the capsid protein transiently associates with ribosomes, and within several minutes the protein binds to viral RNA and rapidly assembles into icosahedric core particles. The resulting nucleocapsid eventually associates with the cytoplasmic domain of the spike glycoprotein E2 at the cell membrane, leading to budding and formation of mature virions. In case of infection, new virions attach to target cells and after clathrin-mediated endocytosis their membrane fuses with the host endosomal membrane. This leads to the release of the nucleocapsid into the cytoplasm, followed by an uncoating event necessary for the genomic RNA to become accessible. The uncoating might be triggered by the interaction of capsid proteins with ribosomes. Binding of ribosomes would release the genomic RNA since the same region is genomic RNA-binding and ribosome-binding. Specifically inhibits interleukin-1 receptor-associated kinase 1/IRAK1-dependent signaling during viral entry, representing a means by which the alphaviruses may evade innate immune detection and activation prior to viral gene expression. Inhibits host transcription. Forms a tetrameric complex with XPO1/CRM1 and the nuclear import receptor importin. This complex blocks the central channel of host nuclear pores thereby inhibiting the receptor-mediated nuclear transport and thus the host mRNA and rRNA transcription. The inhibition of transcription is linked to a cytopathic effect on the host cell. Provides the signal sequence for the translocation of the precursor of protein E3/E2 to the host endoplasmic reticulum. Furin-cleaved E3 remains associated with spike glycoprotein E1 and mediates pH protection of the latter during the transport via the secretory pathway. After virion release from the host cell, the assembly protein E3 is gradually released in the extracellular space. Functionally, plays an essential role in viral attachment to target host cell, by binding to the cell receptor PCDH10. Some specific strains may also bind host receptors VLDLR and LRP8/APOER2. Synthesized as a pE2 precursor which is processed by furin at the cell membrane just before virion budding, giving rise to E2-E1 heterodimer. The pE2-E1 heterodimer is stable, whereas E2-E1 is unstable and dissociate at low pH. pE2 is processed at the last step, presumably to avoid E1 fusion activation before its final export to cell surface. E2 C-terminus contains a transitory transmembrane that would be disrupted by palmitoylation, resulting in reorientation of the C-terminal tail from lumenal to cytoplasmic side. This step is critical since E2 C-terminus is involved in budding by interacting with capsid proteins. This release of E2 C-terminus in cytoplasm occurs lately in protein export, and precludes premature assembly of particles at the endoplasmic reticulum membrane. Its function is as follows. Protein 6K: Acts as a viroporin that participates in virus glycoprotein processing and transport to the plasma membrane, cell permeabilization and budding of viral particles. Disrupts the calcium homeostasis of the cell, probably at the endoplasmic reticulum level resulting in the increased levels of cytoplasmic calcium. Because of its lipophilic properties, the 6K protein is postulated to influence the selection of lipids that interact with the transmembrane domains of the glycoproteins, which, in turn, affects the deformability of the bilayer required for the extreme curvature that occurs as budding proceeds. Present in low amount in virions, about 3% compared to viral glycoproteins. In terms of biological role, class II viral fusion protein. Fusion activity is inactive as long as E1 is bound to E2 in mature virion. After virus attachment to target cell receptor PCDH10 and endocytosis, acidification of the endosome induce dissociation of E1/E2 heterodimer and concomitant trimerization of the E1 subunits. This E1 trimer is fusion active, and promotes release of viral nucleocapsid in cytoplasm after endosome and viral membrane fusion. Efficient fusion requires the presence of cholesterol and sphingolipid in the target membrane. This is Structural polyprotein from Western equine encephalitis virus (WEEV).